Reading from the N-terminus, the 395-residue chain is Phosphopentomutase (395 aa).

D12, D289, H294, D330, H331, and H342 together coordinate Mn(2+).

It belongs to the phosphopentomutase family. It depends on Mn(2+) as a cofactor.

It is found in the cytoplasm. The catalysed reaction is 2-deoxy-alpha-D-ribose 1-phosphate = 2-deoxy-D-ribose 5-phosphate. The enzyme catalyses alpha-D-ribose 1-phosphate = D-ribose 5-phosphate. It participates in carbohydrate degradation; 2-deoxy-D-ribose 1-phosphate degradation; D-glyceraldehyde 3-phosphate and acetaldehyde from 2-deoxy-alpha-D-ribose 1-phosphate: step 1/2. Its function is as follows. Isomerase that catalyzes the conversion of deoxy-ribose 1-phosphate (dRib-1-P) and ribose 1-phosphate (Rib-1-P) to deoxy-ribose 5-phosphate (dRib-5-P) and ribose 5-phosphate (Rib-5-P), respectively. The sequence is that of Phosphopentomutase from Levilactobacillus brevis (strain ATCC 367 / BCRC 12310 / CIP 105137 / JCM 1170 / LMG 11437 / NCIMB 947 / NCTC 947) (Lactobacillus brevis).